Consider the following 389-residue polypeptide: Phosphoglycerate kinase (389 aa).

Residues 21–23 (DLN), arginine 36, 59–62 (HLGR), arginine 112, and arginine 145 each bind substrate. ATP is bound by residues lysine 196, glutamate 318, and 344–347 (GGDS).

It belongs to the phosphoglycerate kinase family. As to quaternary structure, monomer.

It is found in the cytoplasm. The catalysed reaction is (2R)-3-phosphoglycerate + ATP = (2R)-3-phospho-glyceroyl phosphate + ADP. It participates in carbohydrate degradation; glycolysis; pyruvate from D-glyceraldehyde 3-phosphate: step 2/5. The protein is Phosphoglycerate kinase of Desulfovibrio desulfuricans (strain ATCC 27774 / DSM 6949 / MB).